The chain runs to 498 residues: L-proline--[L-prolyl-carrier protein] ligase (498 aa).

It belongs to the ATP-dependent AMP-binding enzyme family.

The catalysed reaction is holo-[peptidyl-carrier protein] + L-proline + ATP = L-prolyl-[peptidyl-carrier protein] + AMP + diphosphate. In terms of biological role, involved in the biosynthesis of pyoluteorin. Catalyzes the conversion of L-proline to L-prolyl-AMP and the transfer of the L-prolyl group to acyl carrier protein PltL. The sequence is that of L-proline--[L-prolyl-carrier protein] ligase from Pseudomonas fluorescens (strain ATCC BAA-477 / NRRL B-23932 / Pf-5).